Consider the following 321-residue polypeptide: Probable pectate lyase A (321 aa).

An N-terminal signal peptide occupies residues 1–18 (MKFVATLIACGLSGLALA). Asparagine 93 carries N-linked (GlcNAc...) asparagine glycosylation. Aspartate 134, aspartate 163, and aspartate 167 together coordinate Ca(2+). Arginine 220 is a catalytic residue. Asparagine 238 carries N-linked (GlcNAc...) asparagine glycosylation.

The protein belongs to the polysaccharide lyase 1 family. It depends on Ca(2+) as a cofactor.

It is found in the secreted. The enzyme catalyses Eliminative cleavage of (1-&gt;4)-alpha-D-galacturonan to give oligosaccharides with 4-deoxy-alpha-D-galact-4-enuronosyl groups at their non-reducing ends.. In terms of biological role, pectinolytic enzyme consist of four classes of enzymes: pectin lyase, polygalacturonase, pectin methylesterase and rhamnogalacturonase. Among pectinolytic enzymes, pectin lyase is the most important in depolymerization of pectin, since it cleaves internal glycosidic bonds of highly methylated pectins. Favors pectate, the anion, over pectin, the methyl ester. The protein is Probable pectate lyase A (plyA) of Aspergillus fumigatus (strain ATCC MYA-4609 / CBS 101355 / FGSC A1100 / Af293) (Neosartorya fumigata).